Reading from the N-terminus, the 407-residue chain is Eukaryotic initiation factor 4A-II (407 aa).

The disordered stretch occupies residues 1 to 22 (MSGGSADYNREHGGPEGMDPDG). The short motif at 33–61 (DNFDDMNLKESLLRGIYAYGFEKPSAIQQ) is the Q motif element. The Helicase ATP-binding domain maps to 64–235 (IIPCIKGYDV…KKFMRDPIRI (172 aa)). 77-84 (AQSGTGKT) provides a ligand contact to ATP. The residue at position 159 (Thr159) is a Phosphothreonine. Positions 183 to 186 (DEAD) match the DEAD box motif. The Helicase C-terminal domain occupies 246-407 (GIKQFYINVE…EMPMNVADLI (162 aa)).

This sequence belongs to the DEAD box helicase family. eIF4A subfamily. As to quaternary structure, eIF4F is a multi-subunit complex, the composition of which varies with external and internal environmental conditions. It is composed of at least EIF4A, EIF4E and EIF4G1/EIFFG3. Interacts with EIF4E. May interact with NOM1.

It carries out the reaction ATP + H2O = ADP + phosphate + H(+). Its function is as follows. ATP-dependent RNA helicase which is a subunit of the eIF4F complex involved in cap recognition and is required for mRNA binding to ribosome. In the current model of translation initiation, eIF4A unwinds RNA secondary structures in the 5'-UTR of mRNAs which is necessary to allow efficient binding of the small ribosomal subunit, and subsequent scanning for the initiator codon. This is Eukaryotic initiation factor 4A-II (EIF4A2) from Bos taurus (Bovine).